The sequence spans 143 residues: D-aminoacyl-tRNA deacylase (143 aa).

The Gly-cisPro motif, important for rejection of L-amino acids motif lies at 135–136 (GP).

It belongs to the DTD family. Homodimer.

It localises to the cytoplasm. The enzyme catalyses glycyl-tRNA(Ala) + H2O = tRNA(Ala) + glycine + H(+). The catalysed reaction is a D-aminoacyl-tRNA + H2O = a tRNA + a D-alpha-amino acid + H(+). In terms of biological role, an aminoacyl-tRNA editing enzyme that deacylates mischarged D-aminoacyl-tRNAs. Also deacylates mischarged glycyl-tRNA(Ala), protecting cells against glycine mischarging by AlaRS. Acts via tRNA-based rather than protein-based catalysis; rejects L-amino acids rather than detecting D-amino acids in the active site. By recycling D-aminoacyl-tRNA to D-amino acids and free tRNA molecules, this enzyme counteracts the toxicity associated with the formation of D-aminoacyl-tRNA entities in vivo and helps enforce protein L-homochirality. This Mycolicibacterium gilvum (strain PYR-GCK) (Mycobacterium gilvum (strain PYR-GCK)) protein is D-aminoacyl-tRNA deacylase.